Reading from the N-terminus, the 396-residue chain is 1-deoxy-D-xylulose 5-phosphate reductoisomerase (396 aa).

T13, G14, S15, I16, and N127 together coordinate NADPH. K128 provides a ligand contact to 1-deoxy-D-xylulose 5-phosphate. E129 contributes to the NADPH binding site. D153 is a Mn(2+) binding site. 1-deoxy-D-xylulose 5-phosphate is bound by residues S154, E155, S184, and H207. Residue E155 participates in Mn(2+) binding. Position 213 (G213) interacts with NADPH. 1-deoxy-D-xylulose 5-phosphate is bound by residues S220, N225, K226, and E229. E229 is a binding site for Mn(2+).

It belongs to the DXR family. The cofactor is Mg(2+). It depends on Mn(2+) as a cofactor.

It carries out the reaction 2-C-methyl-D-erythritol 4-phosphate + NADP(+) = 1-deoxy-D-xylulose 5-phosphate + NADPH + H(+). The protein operates within isoprenoid biosynthesis; isopentenyl diphosphate biosynthesis via DXP pathway; isopentenyl diphosphate from 1-deoxy-D-xylulose 5-phosphate: step 1/6. Catalyzes the NADPH-dependent rearrangement and reduction of 1-deoxy-D-xylulose-5-phosphate (DXP) to 2-C-methyl-D-erythritol 4-phosphate (MEP). The chain is 1-deoxy-D-xylulose 5-phosphate reductoisomerase from Pseudomonas fluorescens (strain Pf0-1).